We begin with the raw amino-acid sequence, 285 residues long: Diaminopimelate epimerase 2 (285 aa).

Substrate contacts are provided by residues Asn-11, Asn-63, Gly-73–Asn-74, Asn-158, Asn-191, Glu-209–Arg-210, and Gly-219–Ser-220.

Belongs to the diaminopimelate epimerase family. Homodimer.

The protein localises to the cytoplasm. The enzyme catalyses (2S,6S)-2,6-diaminopimelate = meso-2,6-diaminopimelate. It functions in the pathway amino-acid biosynthesis; L-lysine biosynthesis via DAP pathway; DL-2,6-diaminopimelate from LL-2,6-diaminopimelate: step 1/1. Functionally, catalyzes the stereoinversion of LL-2,6-diaminopimelate (L,L-DAP) to meso-diaminopimelate (meso-DAP), a precursor of L-lysine and an essential component of the bacterial peptidoglycan. The chain is Diaminopimelate epimerase 2 from Nostoc sp. (strain PCC 7120 / SAG 25.82 / UTEX 2576).